A 235-amino-acid chain; its full sequence is Rab-like protein 3 (235 aa).

Positions 1–235 (MASLDRVKVL…GGNFKSLHYD (235 aa)) are small GTPase-like. GTP contacts are provided by residues 16-21 (GVGKSS), 148-150 (KLD), and 179-180 (DC).

The protein belongs to the small GTPase superfamily. Rab family. As to quaternary structure, homodimer.

Its function is as follows. Required for KRAS signaling regulation and modulation of cell proliferation. Regulator of KRAS prenylation, and probably prenylation of other small GTPases. Required for lymphocyte development and function. Not required for myeloid cell development. The polypeptide is Rab-like protein 3 (rabl3) (Xenopus tropicalis (Western clawed frog)).